The following is a 149-amino-acid chain: MADQLTEEQIAEFKEAFSLFDKDGDGTITTKELGTVMRSLGQNPTEAELQDMINEVDADGNGTIDFPEFLTMMARKMKDTDSEEEILEAFKVFDKDGNGFISAAELRHIMTNLGEKLTDEEVDEMIREADIDGDGQINYEEFVKMMMSK.

EF-hand domains lie at 8–43 (EQIA…LGQN), 44–79 (PTEA…KMKD), 81–116 (DSEE…LGEK), and 117–149 (LTDE…MMSK). 19 residues coordinate Ca(2+): Asp-21, Asp-23, Asp-25, Thr-27, Glu-32, Asp-57, Asp-59, Asn-61, Thr-63, Glu-68, Asp-94, Asp-96, Asn-98, Glu-105, Asp-130, Asp-132, Asp-134, Gln-136, and Glu-141.

It belongs to the calmodulin family.

Its function is as follows. Calmodulin mediates the control of a large number of enzymes, ion channels and other proteins by Ca(2+). Among the enzymes to be stimulated by the calmodulin-Ca(2+) complex are a number of protein kinases and phosphatases. The sequence is that of Calmodulin from Globisporangium splendens (Leaf rot fungus).